A 154-amino-acid polypeptide reads, in one-letter code: SsrA-binding protein (154 aa).

The disordered stretch occupies residues 134 to 154; it reads DKREDIKKRDQERELSRRFKN.

It belongs to the SmpB family.

The protein localises to the cytoplasm. Required for rescue of stalled ribosomes mediated by trans-translation. Binds to transfer-messenger RNA (tmRNA), required for stable association of tmRNA with ribosomes. tmRNA and SmpB together mimic tRNA shape, replacing the anticodon stem-loop with SmpB. tmRNA is encoded by the ssrA gene; the 2 termini fold to resemble tRNA(Ala) and it encodes a 'tag peptide', a short internal open reading frame. During trans-translation Ala-aminoacylated tmRNA acts like a tRNA, entering the A-site of stalled ribosomes, displacing the stalled mRNA. The ribosome then switches to translate the ORF on the tmRNA; the nascent peptide is terminated with the 'tag peptide' encoded by the tmRNA and targeted for degradation. The ribosome is freed to recommence translation, which seems to be the essential function of trans-translation. In Leuconostoc mesenteroides subsp. mesenteroides (strain ATCC 8293 / DSM 20343 / BCRC 11652 / CCM 1803 / JCM 6124 / NCDO 523 / NBRC 100496 / NCIMB 8023 / NCTC 12954 / NRRL B-1118 / 37Y), this protein is SsrA-binding protein.